The primary structure comprises 72 residues: Large ribosomal subunit protein bL31 (72 aa).

Zn(2+) is bound by residues Cys-17, Cys-19, Cys-37, and Cys-40.

It belongs to the bacterial ribosomal protein bL31 family. Type A subfamily. In terms of assembly, part of the 50S ribosomal subunit. Requires Zn(2+) as cofactor.

Binds the 23S rRNA. The protein is Large ribosomal subunit protein bL31 of Clostridium botulinum (strain Loch Maree / Type A3).